Consider the following 444-residue polypeptide: Ribitol-5-phosphate xylosyltransferase 1 (444 aa).

Over 1–9 the chain is Cytoplasmic; sequence MRLTRTRLC. A helical; Signal-anchor for type II membrane protein transmembrane segment spans residues 10–30; that stretch reads SLLVALYCLFSIYAAYHVFFG. The Extracellular segment spans residues 31–444; the sequence is RRRRPLGTTS…ESSFFINNKV (414 aa). The disordered stretch occupies residues 38–79; it reads TTSRNSRKAAAAQAKERRGREQSALESEEWNPWEGDEKNEQR. The span at 51 to 60 shows a compositional bias: basic and acidic residues; sequence AKERRGREQS.

This sequence belongs to the RXYLT1 family. As to quaternary structure, forms a complex composed of FKTN/fukutin, FKRP and RXYLT1/TMEM5.

It localises to the golgi apparatus membrane. It catalyses the reaction 3-O-[Rib-ol-P-Rib-ol-P-3-beta-D-GalNAc-(1-&gt;3)-beta-D-GlcNAc-(1-&gt;4)-(O-6-P-alpha-D-Man)]-Thr-[protein] + UDP-alpha-D-xylose = 3-O-[beta-D-Xyl-(1-&gt;4)-Rib-ol-P-Rib-ol-P-3-beta-D-GalNAc-(1-&gt;3)-beta-D-GlcNAc-(1-&gt;4)-(O-6-P-alpha-D-Man)]-Thr-[protein] + UDP + H(+). The protein operates within protein modification; protein glycosylation. Its function is as follows. Acts as a UDP-D-xylose:ribitol-5-phosphate beta1,4-xylosyltransferase, which catalyzes the transfer of UDP-D-xylose to ribitol 5-phosphate (Rbo5P) to form the Xylbeta1-4Rbo5P linkage on O-mannosyl glycan. Participates in the biosynthesis of the phosphorylated O-mannosyl trisaccharide (N-acetylgalactosamine-beta-3-N-acetylglucosamine-beta-4-(phosphate-6-)mannose), a carbohydrate structure present in alpha-dystroglycan (DAG1), which is required for binding laminin G-like domain-containing extracellular proteins with high affinity. The sequence is that of Ribitol-5-phosphate xylosyltransferase 1 from Mus musculus (Mouse).